The following is a 239-amino-acid chain: tRNA (guanine-N(1)-)-methyltransferase (239 aa).

S-adenosyl-L-methionine contacts are provided by residues Gly108 and 127 to 132 (LGDYVL).

The protein belongs to the RNA methyltransferase TrmD family. In terms of assembly, homodimer.

It localises to the cytoplasm. The catalysed reaction is guanosine(37) in tRNA + S-adenosyl-L-methionine = N(1)-methylguanosine(37) in tRNA + S-adenosyl-L-homocysteine + H(+). Functionally, specifically methylates guanosine-37 in various tRNAs. In Streptococcus pneumoniae serotype 19F (strain G54), this protein is tRNA (guanine-N(1)-)-methyltransferase.